The following is a 96-amino-acid chain: Large ribosomal subunit protein eL43 (96 aa).

The C4-type zinc finger occupies 41-62 (CPVCGFMKLKRISTSIWECKKC).

It belongs to the eukaryotic ribosomal protein eL43 family. Requires Zn(2+) as cofactor.

The polypeptide is Large ribosomal subunit protein eL43 (Methanococcus aeolicus (strain ATCC BAA-1280 / DSM 17508 / OCM 812 / Nankai-3)).